Consider the following 198-residue polypeptide: Nucleoid occlusion factor SlmA (198 aa).

Residues 9 to 70 form the HTH tetR-type domain; it reads RNRREEILQA…SLIEFIEDSL (62 aa). Positions 33–52 form a DNA-binding region, H-T-H motif; it reads TTAKLAANVGVSEAALYRHF. Residues 119–144 are a coiled coil; the sequence is DRLQGRINQLYERIEVQLRQVLRERK.

This sequence belongs to the nucleoid occlusion factor SlmA family. As to quaternary structure, homodimer. Interacts with FtsZ.

It is found in the cytoplasm. The protein localises to the nucleoid. Functionally, required for nucleoid occlusion (NO) phenomenon, which prevents Z-ring formation and cell division over the nucleoid. Acts as a DNA-associated cell division inhibitor that binds simultaneously chromosomal DNA and FtsZ, and disrupts the assembly of FtsZ polymers. SlmA-DNA-binding sequences (SBS) are dispersed on non-Ter regions of the chromosome, preventing FtsZ polymerization at these regions. In Sodalis glossinidius (strain morsitans), this protein is Nucleoid occlusion factor SlmA.